The sequence spans 339 residues: Phosphoribosylformylglycinamidine cyclo-ligase (339 aa).

Belongs to the AIR synthase family.

It localises to the cytoplasm. The catalysed reaction is 2-formamido-N(1)-(5-O-phospho-beta-D-ribosyl)acetamidine + ATP = 5-amino-1-(5-phospho-beta-D-ribosyl)imidazole + ADP + phosphate + H(+). It functions in the pathway purine metabolism; IMP biosynthesis via de novo pathway; 5-amino-1-(5-phospho-D-ribosyl)imidazole from N(2)-formyl-N(1)-(5-phospho-D-ribosyl)glycinamide: step 2/2. This Fusobacterium nucleatum subsp. nucleatum (strain ATCC 25586 / DSM 15643 / BCRC 10681 / CIP 101130 / JCM 8532 / KCTC 2640 / LMG 13131 / VPI 4355) protein is Phosphoribosylformylglycinamidine cyclo-ligase.